A 93-amino-acid polypeptide reads, in one-letter code: uncharacterized protein (93 aa).

Residues 26–73 (NRGTIFRPMTRNSGIVGRRGGPVAPAPFRNNVQKPGTRPPGFKPPSGV) form a disordered region.

This is an uncharacterized protein from Caenorhabditis elegans.